We begin with the raw amino-acid sequence, 380 residues long: tRNA-specific 2-thiouridylase MnmA (380 aa).

Residues 12 to 19 (GLSGGVDS) and Met-38 each bind ATP. The interaction with target base in tRNA stretch occupies residues 108–110 (NPD). The active-site Nucleophile is the Cys-113. Residues Cys-113 and Cys-210 are joined by a disulfide bond. An ATP-binding site is contributed by Gly-138. Residues 160-162 (KDQ) are interaction with tRNA. Cys-210 (cysteine persulfide intermediate) is an active-site residue.

This sequence belongs to the MnmA/TRMU family.

The protein localises to the cytoplasm. The catalysed reaction is S-sulfanyl-L-cysteinyl-[protein] + uridine(34) in tRNA + AH2 + ATP = 2-thiouridine(34) in tRNA + L-cysteinyl-[protein] + A + AMP + diphosphate + H(+). Its function is as follows. Catalyzes the 2-thiolation of uridine at the wobble position (U34) of tRNA, leading to the formation of s(2)U34. In Ureaplasma urealyticum serovar 10 (strain ATCC 33699 / Western), this protein is tRNA-specific 2-thiouridylase MnmA.